Consider the following 376-residue polypeptide: Glutamate 5-kinase (376 aa).

Residue Lys-18 coordinates ATP. 3 residues coordinate substrate: Ser-58, Asp-145, and Asn-157. Residues Ser-177 to Asp-178 and Thr-218 to Lys-224 each bind ATP. A PUA domain is found at Thr-280–Pro-358.

It belongs to the glutamate 5-kinase family.

It localises to the cytoplasm. The catalysed reaction is L-glutamate + ATP = L-glutamyl 5-phosphate + ADP. Its pathway is amino-acid biosynthesis; L-proline biosynthesis; L-glutamate 5-semialdehyde from L-glutamate: step 1/2. Functionally, catalyzes the transfer of a phosphate group to glutamate to form L-glutamate 5-phosphate. The sequence is that of Glutamate 5-kinase from Mycobacterium tuberculosis (strain ATCC 25177 / H37Ra).